Reading from the N-terminus, the 694-residue chain is Elongation factor G (694 aa).

A tr-type G domain is found at 8–287; the sequence is EDYRNFGIMA…AVVSYLPSPI (280 aa). GTP-binding positions include 17–24, 86–90, and 140–143; these read AHIDAGKT, DTPGH, and NKMD.

The protein belongs to the TRAFAC class translation factor GTPase superfamily. Classic translation factor GTPase family. EF-G/EF-2 subfamily.

It localises to the cytoplasm. Catalyzes the GTP-dependent ribosomal translocation step during translation elongation. During this step, the ribosome changes from the pre-translocational (PRE) to the post-translocational (POST) state as the newly formed A-site-bound peptidyl-tRNA and P-site-bound deacylated tRNA move to the P and E sites, respectively. Catalyzes the coordinated movement of the two tRNA molecules, the mRNA and conformational changes in the ribosome. The polypeptide is Elongation factor G (Bartonella tribocorum (strain CIP 105476 / IBS 506)).